Here is a 210-residue protein sequence, read N- to C-terminus: Glutathione S-transferase mdpJ (210 aa).

Positions serine 2 to arginine 83 constitute a GST N-terminal domain. The GST C-terminal domain maps to aspartate 77–leucine 200.

Belongs to the GST superfamily.

Its pathway is secondary metabolite biosynthesis. Glutathione S-transferase; part of the gene cluster that mediates the biosynthesis of monodictyphenone, a prenyl xanthone derivative. The pathway begins with the synthesis of atrochrysone thioester by the polyketide synthase (PKS) mdpG. The atrochrysone carboxyl ACP thioesterase mdpF then breaks the thioester bond and releases the atrochrysone carboxylic acid from mdpG. The atrochrysone carboxylic acid is then converted to atrochrysone which is further transformed into emodin anthrone. The next step is performed by the anthrone oxygenase mdpH that catalyzes the oxidation of emodinanthrone to emodin. Emodin is further modified to yield monodictyphenone via several steps involving mdpB, mdpC mdpJ, mdpK and mdpL. These enzymes with xptA, xptB and xptC are also proposed to be involved in the synthesis of shamixanthone from emodin. Especially, direct reduction of emodin by the short chain dehydrogenase mdpC followed by dehydration catalyzed by the scytalone dehydratase-like protein mdpB gives loss of oxygen and formation of chrysophanol intermediate in two simple steps. In Emericella nidulans (strain FGSC A4 / ATCC 38163 / CBS 112.46 / NRRL 194 / M139) (Aspergillus nidulans), this protein is Glutathione S-transferase mdpJ.